The primary structure comprises 364 residues: Heme A synthase (364 aa).

Transmembrane regions (helical) follow at residues 25 to 45, 111 to 131, 139 to 159, 174 to 194, 212 to 232, 270 to 290, 305 to 325, and 327 to 347; these read ALRLWLGLVILALFALVLVGG, FLARSIGVIFALPLVFFWATG, WPLVGILALGGFQGFIGWWMV, LATHLVTACLIFSACVWVMRG, AIALLCLVLFQIYLGALVAGL, VQFVHRIGAYTVLLVALYHMV, SVVLFAIVCCQAVLGISALLL, and VPLDAALAHQGGALILLGFTV. A heme-binding site is contributed by His-274. Residue His-335 coordinates heme.

It belongs to the COX15/CtaA family. Type 2 subfamily. In terms of assembly, interacts with CtaB. The cofactor is heme b.

It is found in the cell membrane. It catalyses the reaction Fe(II)-heme o + 2 A + H2O = Fe(II)-heme a + 2 AH2. The protein operates within porphyrin-containing compound metabolism; heme A biosynthesis; heme A from heme O: step 1/1. Its function is as follows. Catalyzes the conversion of heme O to heme A by two successive hydroxylations of the methyl group at C8. The first hydroxylation forms heme I, the second hydroxylation results in an unstable dihydroxymethyl group, which spontaneously dehydrates, resulting in the formyl group of heme A. This is Heme A synthase from Allorhizobium ampelinum (strain ATCC BAA-846 / DSM 112012 / S4) (Agrobacterium vitis (strain S4)).